The chain runs to 349 residues: MVRFIEENTKLVEKETGNKSNNDVTTTKKKALQDIIINNGVGLINSWVDSMRACSPTHLKSLLKQSSWLTEHPSALDMFEEILHLSEGKQIVMFLDYDGTLSPIVDDPDRAFMSRKMRRTVRKLANCFPTAIVSGRCIEKVYNFVKLTELYYAGSHGMDIKGPEQGSKYEQILQDSKSLLCQPATEFLPMIDEVYHKLVEKTKSTPGAQVENNKFCVSVHFRRVDENNWSDLANQVRSVMKDYPKLRLTQGRKVLEVRPIIKWDKGKALEFLLESLGYANCTDVFPLYIGDDRTDEDAFKVLRERRQGLGILVSKFPKETSASYSLQEPDEVMEFLQRLVEWKQLRSGA.

It belongs to the trehalose phosphatase family. It depends on a divalent metal cation as a cofactor.

The enzyme catalyses alpha,alpha-trehalose 6-phosphate + H2O = alpha,alpha-trehalose + phosphate. The protein operates within glycan biosynthesis; trehalose biosynthesis. Its function is as follows. Removes the phosphate from trehalose 6-phosphate to produce free trehalose. Trehalose accumulation in plant may improve abiotic stress tolerance. This chain is Probable trehalose-phosphate phosphatase H (TPPH), found in Arabidopsis thaliana (Mouse-ear cress).